An 86-amino-acid chain; its full sequence is RNA-binding protein Hfq (86 aa).

The Sm domain maps to 9–68 (DPYLNVLRKERIPVSIYLVNGIKLQGQVESFDQFVVLLKNTVSQMVYKHAISTVVPSRPV).

The protein belongs to the Hfq family. In terms of assembly, homohexamer.

In terms of biological role, RNA chaperone that binds small regulatory RNA (sRNAs) and mRNAs to facilitate mRNA translational regulation in response to envelope stress, environmental stress and changes in metabolite concentrations. Also binds with high specificity to tRNAs. This is RNA-binding protein Hfq from Saccharophagus degradans (strain 2-40 / ATCC 43961 / DSM 17024).